We begin with the raw amino-acid sequence, 421 residues long: Vinorine synthase (421 aa).

Catalysis depends on proton acceptor residues histidine 160 and aspartate 362.

This sequence belongs to the plant acyltransferase family. Monomer. As to expression, mainly expressed in roots and, to a lower level, in leaves.

The enzyme catalyses 16-epivellosimine + acetyl-CoA = vinorine + CoA. The protein operates within alkaloid biosynthesis; ajmaline biosynthesis. Its activity is regulated as follows. Complete inhibition by 4-(2-aminoethyl)-benzenesulfonyl fluoride (AEBSF), N-tosyl-L-phenylalanine chloromethylketone (TPCK), Hg(2+) and diethyl-pyrocarbonate (DEPC). 50% inhibition by N-(N-(L-3-trans-carboxirane-2-carbonyl)-L-leucyl)-agmanitine (E-64), N-alpha-p-tosyl-L-lysine chloromethylketone (TLCK) and phenylmethylsulfonyl fluoride (PMSF). In terms of biological role, acetyltransferase involved in the biosynthesis of ajmaline-type monoterpenoid indole alkaloids (MIAs) natural products, important plant-derived pharmaceuticals used in the therapy of heart disorders. Catalyzes the conversion of 16-epivellosimine to vinorine, precursor of vomilenine, an intermediate chemical in the biosynthesis of ajmaline. Acts on gardneral, but not on polyneuridine aldehyde or N-methylgardneral. The sequence is that of Vinorine synthase from Rauvolfia serpentina (Serpentine wood).